We begin with the raw amino-acid sequence, 95 residues long: Co-chaperonin GroES (95 aa).

It belongs to the GroES chaperonin family. As to quaternary structure, heptamer of 7 subunits arranged in a ring. Interacts with the chaperonin GroEL.

It localises to the cytoplasm. Functionally, together with the chaperonin GroEL, plays an essential role in assisting protein folding. The GroEL-GroES system forms a nano-cage that allows encapsulation of the non-native substrate proteins and provides a physical environment optimized to promote and accelerate protein folding. GroES binds to the apical surface of the GroEL ring, thereby capping the opening of the GroEL channel. This is Co-chaperonin GroES from Alkalilimnicola ehrlichii (strain ATCC BAA-1101 / DSM 17681 / MLHE-1).